Reading from the N-terminus, the 668-residue chain is DNA mismatch repair protein MutL (668 aa).

Belongs to the DNA mismatch repair MutL/HexB family.

In terms of biological role, this protein is involved in the repair of mismatches in DNA. It is required for dam-dependent methyl-directed DNA mismatch repair. May act as a 'molecular matchmaker', a protein that promotes the formation of a stable complex between two or more DNA-binding proteins in an ATP-dependent manner without itself being part of a final effector complex. This Limosilactobacillus reuteri (strain DSM 20016) (Lactobacillus reuteri) protein is DNA mismatch repair protein MutL.